A 569-amino-acid polypeptide reads, in one-letter code: Arginine--tRNA ligase (569 aa).

Residues 123–133 (ANPNGPLHVGH) carry the 'HIGH' region motif.

This sequence belongs to the class-I aminoacyl-tRNA synthetase family.

The protein resides in the cytoplasm. The enzyme catalyses tRNA(Arg) + L-arginine + ATP = L-arginyl-tRNA(Arg) + AMP + diphosphate. In Methanosarcina mazei (strain ATCC BAA-159 / DSM 3647 / Goe1 / Go1 / JCM 11833 / OCM 88) (Methanosarcina frisia), this protein is Arginine--tRNA ligase.